The sequence spans 472 residues: Doublesex- and mab-3-related transcription factor 3 (472 aa).

Residues 29–76 (CARCRNHGVLSWLKGHKRYCRFKDCTCEKCILIIERQRVMAAQVALRR) constitute a DNA-binding region (DM). Disordered regions lie at residues 89–128 (DSLR…AELA) and 155–191 (EERL…GCFT). Residues 95–123 (PGPPPPGDAVAAPQPPPASQPSQPQPPRP) are compositionally biased toward pro residues. Positions 155-179 (EERLGDGKSADNTEVFSDKDTDQRS) are enriched in basic and acidic residues. In terms of domain architecture, DMA spans 249–284 (RPPLEVLKKIFPNQKPTVLELILKGCGGDLVSAVEV). Residues 430–472 (TEDPRISIPDDGCPFVSKQSIYTEDDYDERSDSSDSRTLNTSS) are disordered.

It belongs to the DMRT family. In terms of assembly, may homodimerize. As to expression, expressed in testis.

The protein resides in the nucleus. Probable transcription factor that plays a role in configuring the spinal circuits controlling stride in vertebrates. Involved in neuronal specification within specific subdivision of spinal cord neurons and in the development of a coordinated locomotor network controlling limb movements. May regulate transcription during sexual development. This Homo sapiens (Human) protein is Doublesex- and mab-3-related transcription factor 3 (DMRT3).